Consider the following 621-residue polypeptide: Microbial serine proteinase (621 aa).

Residues 1–24 (MRKTSLALAISALLSALPIASVQA) form the signal peptide. A Peptidase S8 domain is found at 68–440 (PRGGMAGNDL…FGLVDVNKTQ (373 aa)). Asp98 functions as the Charge relay system in the catalytic mechanism. A disordered region spans residues 114 to 133 (PGSKNVVTGGSDPTPTDPDR). Active-site charge relay system residues include His137 and Ser354. One can recognise a P/Homo B domain in the interval 454 to 619 (AVALAKGKGN…GYSVLGHDAA (166 aa)). The segment at 457-485 (LAKGKGNGRSPSAPSRYVGSSPTRSSTQV) is disordered. Residues 465 to 485 (RSPSAPSRYVGSSPTRSSTQV) show a composition bias toward polar residues.

It belongs to the peptidase S8 family.

Its function is as follows. Agent of furonculosis. The polypeptide is Microbial serine proteinase (aspA) (Aeromonas salmonicida).